We begin with the raw amino-acid sequence, 156 residues long: MILYRLTRSKYVESAWSGTGAKLYGGRWHNIGRPAVYVATSVSLAVLEVLVHVGDDELLTDFALLSIDIPENQIDILDIDTLPSDWNAPVPSTCTMEIGSEWFEVSHSIGLVVPSAIVPYENNVILNPMAKDFHKYINTVKRLDFGIDSRLVKAKK.

It belongs to the MbcT/ParT/Res family. In terms of assembly, homodimer. Forms a complex with cognate antitoxin Xre.

Its function is as follows. Toxic component of a type II toxin-antitoxin (TA) system. Expression in E.coli inhibits cell growth; bacteriostasis is neutralized by expression of cognate antitoxin Xre. Expression in E.coli leads to almost complete depletion of intracellular NAD(+): NAD(+) levels are partially restored when coexpressed with antitoxin Xre. The polypeptide is Toxin Res (Photorhabdus laumondii subsp. laumondii (strain DSM 15139 / CIP 105565 / TT01) (Photorhabdus luminescens subsp. laumondii)).